The chain runs to 608 residues: Preterminal protein (608 aa).

Positions 338-347 (RLPMRRRRRR) match the Nuclear localization signal motif. The tract at residues 342 to 377 (RRRRRRAPPPPPMSEELSEPEVEAFPPASPPRRSFE) is disordered. S536 bears the O-(5'-phospho-DNA)-serine mark.

This sequence belongs to the adenoviridae terminal protein family. Heterodimer with the polymerase; this heterodimer binds to bp 9 to 18 of the genome. Interacts with host POU2F1; POU2F1 binds to the auxiliary sequences in the inverted terminal repeats and tethers the pTP-POL heterodimer to the origin DNA thereby participating in the assembly of the pre-initiation complex (POL-TP-DBP-NFIA-POU2F1). Preterminal protein is used to replicate viral genome, upon genomic encapsidation it is processed first into iTP and finally into TP by adenovirus protease.

It localises to the host nucleus matrix. In terms of biological role, protein covalently bound to the viral DNA that acts as a primer for viral genomic replication by DNA strand displacement. Assembles on the viral origin of replication in an initiation complex with viral polymerase, DBP, host NFIA and host POU2F1/OCT1. During initiation, the polymerase covalently couples the first dCTP with Ser-580 of pTP. The terminal protein stimulates the template activity over 20 fold compared to protein-free templates. Neo-synthesized viral genomes are linked to two preterminal proteins, one for each 5' end. These new genomes are encapsidated in the nucleus, and during capsid maturation by viral protease, preterminal protein is first cleaved into intermediary (iTP), then into mature TP. May play a role in host nuclear matrix localization of genomic DNA. This is Preterminal protein from Canine adenovirus serotype 1 (strain CLL) (CAdV-1).